The chain runs to 316 residues: UDP-N-acetylenolpyruvoylglucosamine reductase (316 aa).

In terms of domain architecture, FAD-binding PCMH-type spans 27–225; the sequence is VGGKAERFYR…KTAINALLKK (199 aa). Residue R190 is part of the active site. S239 serves as the catalytic Proton donor. The active site involves E309.

It belongs to the MurB family. FAD is required as a cofactor.

The protein resides in the cytoplasm. The enzyme catalyses UDP-N-acetyl-alpha-D-muramate + NADP(+) = UDP-N-acetyl-3-O-(1-carboxyvinyl)-alpha-D-glucosamine + NADPH + H(+). The protein operates within cell wall biogenesis; peptidoglycan biosynthesis. Cell wall formation. In Coxiella burnetii (strain Dugway 5J108-111), this protein is UDP-N-acetylenolpyruvoylglucosamine reductase.